The chain runs to 390 residues: Protein phosphatase 1B (390 aa).

Basic and acidic residues predominate over residues 1 to 14 (MGAFLDKPKTEKHN). The segment at 1–20 (MGAFLDKPKTEKHNAHGAGN) is disordered. Residue glycine 2 is the site of N-myristoyl glycine attachment. Residue lysine 12 forms a Glycyl lysine isopeptide (Lys-Gly) (interchain with G-Cter in ISG15) linkage. Residues 23–295 (RYGLSSMQGW…DNMSVVLVCF (273 aa)) form the PPM-type phosphatase domain. Positions 60, 61, 243, and 286 each coordinate Mn(2+). Residues 371–390 (NPHKDNDGGAGDLEDSLVAL) form a disordered region. The residue at position 386 (serine 386) is a Phosphoserine.

This sequence belongs to the PP2C family. Monomer. Interacts with PAK6. Interacts with the phosphorylated form of IKBKB/IKKB. The cofactor is Mg(2+). It depends on Mn(2+) as a cofactor. Isgylation negatively regulates its activity. In terms of processing, N-myristoylation is essential for the recognition of its substrates for dephosphorylation. In terms of tissue distribution, isoform 1: Expressed ubiquitously. Isoform 2: Expressed exclusively in testis and intestine. Isoform 3: Expressed exclusively in brain and intestine. Isoform 4: Expressed exclusively in testis and intestine.

The protein localises to the cytoplasm. Its subcellular location is the cytosol. It localises to the membrane. The enzyme catalyses O-phospho-L-seryl-[protein] + H2O = L-seryl-[protein] + phosphate. It carries out the reaction O-phospho-L-threonyl-[protein] + H2O = L-threonyl-[protein] + phosphate. Functionally, enzyme with a broad specificity. Dephosphorylates PRKAA1 and PRKAA2. Inhibits TBK1-mediated antiviral signaling by dephosphorylating it at 'Ser-172'. Plays an important role in the termination of TNF-alpha-mediated NF-kappa-B activation through dephosphorylating and inactivating IKBKB/IKKB. The chain is Protein phosphatase 1B (Ppm1b) from Mus musculus (Mouse).